The following is a 221-amino-acid chain: Transmembrane emp24 domain-containing protein 3 (221 aa).

Residues 1-30 (MGNEVPRASSFQMLMLLLLLLLLRAERLRG) form the signal peptide. Residues 31–184 (AELTFELPDN…RAEDLNSRVS (154 aa)) lie on the Lumenal side of the membrane. Residues 42–124 (KQCFHEEVEQ…HKTVYFDFQV (83 aa)) enclose the GOLD domain. Arg103 is subject to Dimethylated arginine. A helical membrane pass occupies residues 185-205 (YWSVGETIALFVVSFSQVLLL). Over 206–221 (KSFFTEKRPINRAVHS) the chain is Cytoplasmic. The short motif at 208–209 (FF) is the COPII vesicle coat-binding element. Positions 208–221 (FFTEKRPINRAVHS) match the COPI vesicle coat-binding motif.

This sequence belongs to the EMP24/GP25L family. Monomer in endoplasmic reticulum, endoplasmic reticulum-Golgi intermediate compartment and cis-Golgi network. Interacts (via C-terminus) with COPG1; the interaction involves dimeric TMED3; however, there are conflicting reports on the interaction. Interacts with GORASP1 and GORASP2.

Its subcellular location is the endoplasmic reticulum-Golgi intermediate compartment membrane. It is found in the golgi apparatus. The protein localises to the cis-Golgi network membrane. The protein resides in the golgi stack membrane. It localises to the endoplasmic reticulum membrane. Its subcellular location is the cytoplasmic vesicle. It is found in the COPI-coated vesicle membrane. Potential role in vesicular protein trafficking, mainly in the early secretory pathway. Contributes to the coupled localization of TMED2 and TMED10 in the cis-Golgi network. This is Transmembrane emp24 domain-containing protein 3 (Tmed3) from Rattus norvegicus (Rat).